Here is a 1293-residue protein sequence, read N- to C-terminus: Putative DNA-directed RNA polymerase 008R (1293 aa).

Zn(2+)-binding residues include Cys-61, Cys-64, Cys-71, His-74, Cys-99, Cys-102, and Cys-123. A DNA-binding region spans residues 270–339; that stretch reads TNRKPMAGIK…PVMVTPFNVS (70 aa). Residues 354 to 376 show a composition bias toward basic and acidic residues; sequence EMRDGTVHRPSEWRPSHGDHMET. Residues 354 to 390 form a disordered region; the sequence is EMRDGTVHRPSEWRPSHGDHMETADGSPLGRVTRPSY. Residues Asp-474, Asp-476, and Asp-478 each contribute to the Mg(2+) site. The segment at 724 to 734 is alpha-amanitin binding; that stretch reads GQQYVGGSRPG. Residues 776 to 788 are bridging helix; the sequence is PREVFFHAKSGRE.

Belongs to the RNA polymerase beta' chain family.

It carries out the reaction RNA(n) + a ribonucleoside 5'-triphosphate = RNA(n+1) + diphosphate. Functionally, component of the DNA-dependent RNA polymerase that catalyzes the transcription of DNA into RNA using the four ribonucleoside triphosphates as substrates. Largest and catalytic component of RNA polymerase II which synthesizes mRNA precursors and many functional non-coding RNAs. Forms the polymerase active center together with the second largest subunit. This is Putative DNA-directed RNA polymerase 008R from Frog virus 3 (isolate Goorha) (FV-3).